The primary structure comprises 330 residues: Phosphate acyltransferase (330 aa).

The protein belongs to the PlsX family. In terms of assembly, homodimer. Probably interacts with PlsY.

The protein localises to the cytoplasm. The enzyme catalyses a fatty acyl-[ACP] + phosphate = an acyl phosphate + holo-[ACP]. It participates in lipid metabolism; phospholipid metabolism. Its function is as follows. Catalyzes the reversible formation of acyl-phosphate (acyl-PO(4)) from acyl-[acyl-carrier-protein] (acyl-ACP). This enzyme utilizes acyl-ACP as fatty acyl donor, but not acyl-CoA. This Streptococcus agalactiae serotype III (strain NEM316) protein is Phosphate acyltransferase.